A 139-amino-acid polypeptide reads, in one-letter code: Class I hydrophobin 1 (139 aa).

The N-terminal stretch at M1–P21 is a signal peptide. Cystine bridges form between C57/C118, C64/C112, C65/C98, and C119/C132.

Belongs to the fungal hydrophobin family. In terms of assembly, self-assembles to form functional amyloid fibrils called rodlets. Self-assembly into fibrillar rodlets occurs spontaneously at hydrophobic:hydrophilic interfaces and the rodlets further associate laterally to form amphipathic monolayers.

It is found in the secreted. The protein resides in the cell wall. Its function is as follows. Aerial growth, conidiation, and dispersal of filamentous fungi in the environment rely upon a capability of their secreting small amphipathic proteins called hydrophobins (HPBs) with low sequence identity. Class I can self-assemble into an outermost layer of rodlet bundles on aerial cell surfaces, conferring cellular hydrophobicity that supports fungal growth, development and dispersal; whereas Class II form highly ordered films at water-air interfaces through intermolecular interactions but contribute nothing to the rodlet structure. Hah1 is a class I hydrophobin that is involved in aerial growth of mycelia, but does not play a role in pathogenesis. In Heterobasidion annosum (Root rot fungus), this protein is Class I hydrophobin 1.